Consider the following 437-residue polypeptide: Glutamyl-tRNA reductase (437 aa).

Substrate contacts are provided by residues 49–52 (TCNR), S109, 114–116 (EGQ), and Q120. The Nucleophile role is filled by C50. 198–203 (GAGRMS) contributes to the NADP(+) binding site.

This sequence belongs to the glutamyl-tRNA reductase family. As to quaternary structure, homodimer.

The enzyme catalyses (S)-4-amino-5-oxopentanoate + tRNA(Glu) + NADP(+) = L-glutamyl-tRNA(Glu) + NADPH + H(+). Its pathway is porphyrin-containing compound metabolism; protoporphyrin-IX biosynthesis; 5-aminolevulinate from L-glutamyl-tRNA(Glu): step 1/2. The protein operates within porphyrin-containing compound metabolism; chlorophyll biosynthesis. Its function is as follows. Catalyzes the NADPH-dependent reduction of glutamyl-tRNA(Glu) to glutamate 1-semialdehyde (GSA). This Prochlorococcus marinus (strain SARG / CCMP1375 / SS120) protein is Glutamyl-tRNA reductase.